We begin with the raw amino-acid sequence, 745 residues long: AP-3 complex subunit beta (745 aa).

Residue Ser-638 is modified to Phosphoserine. Residues 674-745 form a disordered region; the sequence is YASETSESSE…TEPEPNYWQS (72 aa). Residues 680–718 are compositionally biased toward acidic residues; the sequence is ESSEGEYETSTSESEDEETDDTSQEEDNEKNSTPDEDTE.

It belongs to the adaptor complexes large subunit family. Adaptor protein complex 3 (AP-3) is a heterotetramer composed of 2 large adaptins (apl5 and apl6), a medium adaptin (apm3) and a small adaptin (aps3).

It is found in the golgi apparatus. The protein localises to the cytoplasmic vesicle. The protein resides in the clathrin-coated vesicle membrane. Adaptins are components of the adaptor complexes which link clathrin to receptors in coated vesicles. Clathrin-associated protein complexes are believed to interact with the cytoplasmic tails of membrane proteins, leading to their selection and concentration. Beta adaptin is a subunit of the plasma membrane adaptor. This chain is AP-3 complex subunit beta (apl6), found in Schizosaccharomyces pombe (strain 972 / ATCC 24843) (Fission yeast).